The chain runs to 689 residues: UvrABC system protein C (689 aa).

Over residues 1 to 19 the composition is skewed to polar residues; that stretch reads MTSDSSDTAKQIGSGQPSG. The segment at 1-59 is disordered; that stretch reads MTSDSSDTAKQIGSGQPSGSPADMRRRDGVAPEQEVDPASLETDEDDEARLPDLPDEPV. Acidic residues predominate over residues 42–59; it reads ETDEDDEARLPDLPDEPV. In terms of domain architecture, GIY-YIG spans 83 to 161; the sequence is TSPGVYRMMN…IKQLRPRFNV (79 aa). Positions 271 to 306 constitute a UVR domain; the sequence is RAVKEDLARAMEQAAADLAFERAALYRDRLAALSAI.

The protein belongs to the UvrC family. As to quaternary structure, interacts with UvrB in an incision complex.

The protein resides in the cytoplasm. The UvrABC repair system catalyzes the recognition and processing of DNA lesions. UvrC both incises the 5' and 3' sides of the lesion. The N-terminal half is responsible for the 3' incision and the C-terminal half is responsible for the 5' incision. The polypeptide is UvrABC system protein C (Nitrobacter winogradskyi (strain ATCC 25391 / DSM 10237 / CIP 104748 / NCIMB 11846 / Nb-255)).